The chain runs to 1171 residues: DNA-directed RNA polymerase subunit beta' (1171 aa).

Zn(2+)-binding residues include C60, C62, C75, and C78. A disordered region spans residues 299 to 319; the sequence is GRRGKPVTGPGNRPLKSLSDM. Residues D449, D451, and D453 each contribute to the Mg(2+) site. Zn(2+)-binding residues include C790, C864, C871, and C874.

This sequence belongs to the RNA polymerase beta' chain family. In terms of assembly, the RNAP catalytic core consists of 2 alpha, 1 beta, 1 beta' and 1 omega subunit. When a sigma factor is associated with the core the holoenzyme is formed, which can initiate transcription. Mg(2+) serves as cofactor. Zn(2+) is required as a cofactor.

It carries out the reaction RNA(n) + a ribonucleoside 5'-triphosphate = RNA(n+1) + diphosphate. DNA-dependent RNA polymerase catalyzes the transcription of DNA into RNA using the four ribonucleoside triphosphates as substrates. In Alkaliphilus metalliredigens (strain QYMF), this protein is DNA-directed RNA polymerase subunit beta'.